The chain runs to 511 residues: Protein HESO1 (511 aa).

Residues 378–511 (ARPQNQQMQQ…GQIWRPRHEQ (134 aa)) are disordered. Positions 381-392 (QNQQMQQNWSQS) are enriched in low complexity. Residues 404–465 (LTQSRPQQNW…TSAGSSQNQG (62 aa)) are compositionally biased toward polar residues.

The protein belongs to the DNA polymerase type-B-like family.

Its subcellular location is the cytoplasm. The protein resides in the P-body. It localises to the nucleus. The enzyme catalyses RNA(n) + UTP = RNA(n)-3'-uridine ribonucleotide + diphosphate. Completely inhibited by 2'-O-methylation on the substrate RNA. Functionally, uridylates small RNAs to trigger their degradation. Catalyzes the uridylation of 5' fragments produced by AGO1-mediated cleavage of miRNA target RNAs. Acts synergistically with URT1 in unmethylated miRNA uridylation, leading to their degradation. URT1 and HESO1 prefer substrates with different 3' end nucleotides and act cooperatively to tail different forms of the same miRNAs. URT1 and HESO1 act sequentially, with URT1 mono-uridylating the miRNAs followed by their further uridylation by HESO1. URT1 and HESO1 are involved in the uridylation and clearance of RISC-generated 5' mRNA fragments. Able to act on AGO1-bound miRNAs and the uridylated species stay associated with AGO1. This Arabidopsis thaliana (Mouse-ear cress) protein is Protein HESO1.